The primary structure comprises 227 residues: 2,3-bisphosphoglycerate-dependent phosphoglycerate mutase (227 aa).

Substrate contacts are provided by residues 7–14 (RHGFSEWN), 20–21 (TG), Arg59, 86–89 (ERHY), Lys97, 113–114 (RR), and 182–183 (GN). His8 functions as the Tele-phosphohistidine intermediate in the catalytic mechanism. The active-site Proton donor/acceptor is Glu86.

The protein belongs to the phosphoglycerate mutase family. BPG-dependent PGAM subfamily. Homodimer.

The enzyme catalyses (2R)-2-phosphoglycerate = (2R)-3-phosphoglycerate. The protein operates within carbohydrate degradation; glycolysis; pyruvate from D-glyceraldehyde 3-phosphate: step 3/5. Catalyzes the interconversion of 2-phosphoglycerate and 3-phosphoglycerate. This Haemophilus influenzae (strain ATCC 51907 / DSM 11121 / KW20 / Rd) protein is 2,3-bisphosphoglycerate-dependent phosphoglycerate mutase.